We begin with the raw amino-acid sequence, 70 residues long: Beta-insect excitatory toxin LqqIT1 (70 aa).

Residues 2 to 65 (KNGYAVDSSG…ISDARKKYCD (64 aa)) form the LCN-type CS-alpha/beta domain. 4 disulfides stabilise this stretch: Cys-16–Cys-37, Cys-22–Cys-42, Cys-26–Cys-44, and Cys-38–Cys-64.

Belongs to the long (4 C-C) scorpion toxin superfamily. Sodium channel inhibitor family. Beta subfamily. Expressed by the venom gland.

The protein localises to the secreted. Excitatory insect beta-toxins induce a spastic paralysis. They bind voltage-independently at site-4 of sodium channels (Nav) and shift the voltage of activation toward more negative potentials thereby affecting sodium channel activation and promoting spontaneous and repetitive firing. In vivo, this toxin induces a fast excitatory contraction paralysis on fly larvae. It is active only on insects. This chain is Beta-insect excitatory toxin LqqIT1, found in Leiurus quinquestriatus quinquestriatus (Egyptian scorpion).